The following is an 88-amino-acid chain: DNA-directed RNA polymerase subunit omega (88 aa).

This sequence belongs to the RNA polymerase subunit omega family. In terms of assembly, the RNAP catalytic core consists of 2 alpha, 1 beta, 1 beta' and 1 omega subunit. When a sigma factor is associated with the core the holoenzyme is formed, which can initiate transcription.

It carries out the reaction RNA(n) + a ribonucleoside 5'-triphosphate = RNA(n+1) + diphosphate. Its function is as follows. Promotes RNA polymerase assembly. Latches the N- and C-terminal regions of the beta' subunit thereby facilitating its interaction with the beta and alpha subunits. This is DNA-directed RNA polymerase subunit omega from Salinispora tropica (strain ATCC BAA-916 / DSM 44818 / JCM 13857 / NBRC 105044 / CNB-440).